The sequence spans 319 residues: Cytochrome f (319 aa).

The first 35 residues, 1-35, serve as a signal peptide directing secretion; sequence MQNRNISYWIKKCVIQSISIVILMKIIAWPSISEA. Heme-binding residues include Tyr36, Cys56, Cys59, and His60. Residues 285 to 305 form a helical membrane-spanning segment; sequence VQSLLVFFVSVTLAQIFLVLK.

Belongs to the cytochrome f family. In terms of assembly, the 4 large subunits of the cytochrome b6-f complex are cytochrome b6, subunit IV (17 kDa polypeptide, petD), cytochrome f and the Rieske protein, while the 4 small subunits are PetG, PetL, PetM and PetN. The complex functions as a dimer. Heme serves as cofactor.

The protein resides in the plastid. Its subcellular location is the chloroplast thylakoid membrane. In terms of biological role, component of the cytochrome b6-f complex, which mediates electron transfer between photosystem II (PSII) and photosystem I (PSI), cyclic electron flow around PSI, and state transitions. The chain is Cytochrome f from Physcomitrium patens (Spreading-leaved earth moss).